We begin with the raw amino-acid sequence, 278 residues long: Phosphatidylglycerol--prolipoprotein diacylglyceryl transferase (278 aa).

4 helical membrane-spanning segments follow: residues 19–39 (WYGI…INEG), 49–69 (FIDF…IYYV), 86–106 (IWNG…VLLI), and 112–132 (MLPP…AQVI). Arg134 serves as a coordination point for a 1,2-diacyl-sn-glycero-3-phospho-(1'-sn-glycerol). A run of 3 helical transmembrane segments spans residues 174 to 194 (QPTY…ILSL), 204 to 224 (GEIF…VEGM), and 235 to 255 (IRVS…LWIY).

The protein belongs to the Lgt family.

It localises to the cell membrane. It carries out the reaction L-cysteinyl-[prolipoprotein] + a 1,2-diacyl-sn-glycero-3-phospho-(1'-sn-glycerol) = an S-1,2-diacyl-sn-glyceryl-L-cysteinyl-[prolipoprotein] + sn-glycerol 1-phosphate + H(+). Its pathway is protein modification; lipoprotein biosynthesis (diacylglyceryl transfer). In terms of biological role, catalyzes the transfer of the diacylglyceryl group from phosphatidylglycerol to the sulfhydryl group of the N-terminal cysteine of a prolipoprotein, the first step in the formation of mature lipoproteins. The protein is Phosphatidylglycerol--prolipoprotein diacylglyceryl transferase of Lactobacillus johnsonii (strain CNCM I-12250 / La1 / NCC 533).